The chain runs to 288 residues: Elongation factor Ts (288 aa).

Residues 79–82 (TDFV) form an involved in Mg(2+) ion dislocation from EF-Tu region.

This sequence belongs to the EF-Ts family.

The protein resides in the cytoplasm. Its function is as follows. Associates with the EF-Tu.GDP complex and induces the exchange of GDP to GTP. It remains bound to the aminoacyl-tRNA.EF-Tu.GTP complex up to the GTP hydrolysis stage on the ribosome. This Ehrlichia ruminantium (strain Welgevonden) protein is Elongation factor Ts.